We begin with the raw amino-acid sequence, 712 residues long: Polyribonucleotide nucleotidyltransferase (712 aa).

Mg(2+) contacts are provided by D487 and D493. The KH domain occupies 554–613; sequence PKIITMTINPDKIRDVIGPSGKQINKIIEETGVKIDIEQDGTVFISSINQEMNDKAKKII. Positions 623-691 constitute an S1 motif domain; it reads GEIYEGKVKR…KQGRVNLSRK (69 aa).

The protein belongs to the polyribonucleotide nucleotidyltransferase family. Mg(2+) is required as a cofactor.

It is found in the cytoplasm. It catalyses the reaction RNA(n+1) + phosphate = RNA(n) + a ribonucleoside 5'-diphosphate. Its function is as follows. Involved in mRNA degradation. Catalyzes the phosphorolysis of single-stranded polyribonucleotides processively in the 3'- to 5'-direction. This Bacillus anthracis protein is Polyribonucleotide nucleotidyltransferase.